The sequence spans 240 residues: Mediator of RNA polymerase II transcription subunit 19-B (240 aa).

The segment covering 1–14 (MTEIFSSLYGQPDS) has biased composition (polar residues). Disordered stretches follow at residues 1-29 (MTEI…GSGK) and 168-240 (PKKK…SSLR). Composition is skewed to basic residues over residues 168–180 (PKKK…KHHR) and 209–221 (KKKK…KKNR).

It belongs to the Mediator complex subunit 19 family. In terms of assembly, component of the Mediator complex.

The protein resides in the nucleus. Component of the Mediator complex, a coactivator involved in the regulated transcription of nearly all RNA polymerase II-dependent genes. Mediator functions as a bridge to convey information from gene-specific regulatory proteins to the basal RNA polymerase II transcription machinery. Mediator is recruited to promoters by direct interactions with regulatory proteins and serves as a scaffold for the assembly of a functional preinitiation complex with RNA polymerase II and the general transcription factors. The chain is Mediator of RNA polymerase II transcription subunit 19-B (med19b) from Danio rerio (Zebrafish).